Consider the following 206-residue polypeptide: Dephospho-CoA kinase (206 aa).

Positions 4–200 (IVALTGGIGS…AHYLQLASQF (197 aa)) constitute a DPCK domain. Position 12–17 (12–17 (GSGKST)) interacts with ATP.

Belongs to the CoaE family.

The protein localises to the cytoplasm. It carries out the reaction 3'-dephospho-CoA + ATP = ADP + CoA + H(+). It functions in the pathway cofactor biosynthesis; coenzyme A biosynthesis; CoA from (R)-pantothenate: step 5/5. In terms of biological role, catalyzes the phosphorylation of the 3'-hydroxyl group of dephosphocoenzyme A to form coenzyme A. This chain is Dephospho-CoA kinase, found in Shigella boydii serotype 4 (strain Sb227).